Consider the following 298-residue polypeptide: Arginase (298 aa).

Residues histidine 98, aspartate 121, histidine 123, and aspartate 125 each contribute to the Mn(2+) site. Residues 123–127, 134–136, and aspartate 177 each bind substrate; these read HGDLN and SGN. Mn(2+) is bound by residues aspartate 225 and aspartate 227. Positions 239 and 270 each coordinate substrate.

It belongs to the arginase family. It depends on Mn(2+) as a cofactor.

It catalyses the reaction L-arginine + H2O = urea + L-ornithine. The protein operates within nitrogen metabolism; urea cycle; L-ornithine and urea from L-arginine: step 1/1. The sequence is that of Arginase (rocF) from Brevibacillus brevis (Bacillus brevis).